The primary structure comprises 113 residues: Small ribosomal subunit protein bS6 (113 aa).

It belongs to the bacterial ribosomal protein bS6 family.

Functionally, binds together with bS18 to 16S ribosomal RNA. The polypeptide is Small ribosomal subunit protein bS6 (Buchnera aphidicola subsp. Schizaphis graminum (strain Sg)).